The chain runs to 714 residues: Polynucleotide 5'-hydroxyl-kinase NOL9 (714 aa).

A2 is modified (N-acetylalanine). The short motif at 31–47 is the Nucleolar localization signal element; it reads RRGRRRFGVLTRVELRR. A disordered region spans residues 80–133; that stretch reads ARSRPAPRSPPTPSVPPAPCTASATCSLLNPRNHSTPQSRAGRPVRKVSPNVTQ. Residues 86–98 are compositionally biased toward pro residues; that stretch reads PRSPPTPSVPPAP. Residues 107–118 are compositionally biased toward polar residues; the sequence is LLNPRNHSTPQS. Phosphoserine is present on S128. Position 322–329 (322–329) interacts with ATP; the sequence is GACDIGKS. Residues 495-714 form an interaction with LAS1L region; that stretch reads FTYEEKESSP…PRHKLRQRRK (220 aa). K500 is covalently cross-linked (Glycyl lysine isopeptide (Lys-Gly) (interchain with G-Cter in SUMO2)). S502 carries the post-translational modification Phosphoserine.

This sequence belongs to the Clp1 family. NOL9/GRC3 subfamily. Interacts with PELP1, WDR18 and SENP3. Interacts with LAS1L to form an ITS2 pre-rRNA endonuclease-kinase complex.

It is found in the nucleus. The protein localises to the nucleolus. The enzyme catalyses a 5'-end dephospho-2'-deoxyribonucleoside-DNA + ATP = a 5'-end 5'-phospho-2'-deoxyribonucleoside-DNA + ADP + H(+). It catalyses the reaction a 5'-end dephospho-ribonucleoside-RNA + ATP = a 5'-end 5'-phospho-ribonucleoside-RNA + ADP + H(+). In terms of biological role, polynucleotide kinase that can phosphorylate the 5'-hydroxyl groups of single-stranded and double-stranded RNA and DNA substrates. Involved in rRNA processing and its kinase activity is required for the processing of the 32S precursor into 5.8S and 28S rRNAs, more specifically for the generation of the major 5.8S(S) form. Required for the efficient pre-rRNA processing of internal transcribed spacer 2 (ITS2). Associates with LAS1L to form an ITS2 pre-rRNA endonuclease-kinase complex and is responsible for the transport of this complex into the nucleolus. In Mus musculus (Mouse), this protein is Polynucleotide 5'-hydroxyl-kinase NOL9.